The chain runs to 289 residues: ATP synthase gamma chain (289 aa).

Belongs to the ATPase gamma chain family. F-type ATPases have 2 components, CF(1) - the catalytic core - and CF(0) - the membrane proton channel. CF(1) has five subunits: alpha(3), beta(3), gamma(1), delta(1), epsilon(1). CF(0) has three main subunits: a, b and c.

Its subcellular location is the cell inner membrane. Functionally, produces ATP from ADP in the presence of a proton gradient across the membrane. The gamma chain is believed to be important in regulating ATPase activity and the flow of protons through the CF(0) complex. The sequence is that of ATP synthase gamma chain from Coxiella burnetii (strain CbuK_Q154) (Coxiella burnetii (strain Q154)).